The sequence spans 437 residues: Chromosomal replication initiator protein DnaA (437 aa).

The tract at residues 1–74 is domain I, interacts with DnaA modulators; the sequence is MNLAWNKILE…EACGDKIPVE (74 aa). The tract at residues 74–98 is domain II; it reads EILIETKATSPLQSFLEKSFDQKDF. The segment at 99–315 is domain III, AAA+ region; it reads QFNPDYTFET…GALNDIYLYK (217 aa). ATP is bound by residues glycine 142, glycine 144, lysine 145, and threonine 146. The domain IV, binds dsDNA stretch occupies residues 316 to 437; that stretch reads KSYSLLFLNL…ERISSKYKLQ (122 aa).

This sequence belongs to the DnaA family. In terms of assembly, oligomerizes as a right-handed, spiral filament on DNA at oriC.

It localises to the cytoplasm. Its function is as follows. Plays an essential role in the initiation and regulation of chromosomal replication. ATP-DnaA binds to the origin of replication (oriC) to initiate formation of the DNA replication initiation complex once per cell cycle. Binds the DnaA box (a 9 base pair repeat at the origin) and separates the double-stranded (ds)DNA. Forms a right-handed helical filament on oriC DNA; dsDNA binds to the exterior of the filament while single-stranded (ss)DNA is stabiized in the filament's interior. The ATP-DnaA-oriC complex binds and stabilizes one strand of the AT-rich DNA unwinding element (DUE), permitting loading of DNA polymerase. After initiation quickly degrades to an ADP-DnaA complex that is not apt for DNA replication. Binds acidic phospholipids. This is Chromosomal replication initiator protein DnaA from Leptospira borgpetersenii serovar Hardjo-bovis (strain JB197).